Reading from the N-terminus, the 276-residue chain is Small ribosomal subunit protein uS2 (276 aa).

The tract at residues 226–276 (KKAREERQLAAAREAAGEPKSEDAPAEAAATEEAPATEAPAAEAQQENAAE) is disordered. Residues 251–276 (AEAAATEEAPATEAPAAEAQQENAAE) are compositionally biased toward low complexity.

The protein belongs to the universal ribosomal protein uS2 family.

The chain is Small ribosomal subunit protein uS2 from Corynebacterium efficiens (strain DSM 44549 / YS-314 / AJ 12310 / JCM 11189 / NBRC 100395).